An 878-amino-acid chain; its full sequence is Aminopeptidase M1-A (878 aa).

Positions 105-212 (VGEGTLVIAF…MSTYLVAVIV (108 aa)) are required for membrane association. Residues Glu145 and 278–282 (GAMEN) each bind substrate. His314 contacts Zn(2+). Glu315 acts as the Proton acceptor in catalysis. Zn(2+) is bound by residues His318 and Glu337. The Dileucine internalization motif motif lies at 727 to 728 (LL).

The protein belongs to the peptidase M1 family. In terms of assembly, homodimer. Zn(2+) is required as a cofactor.

It is found in the membrane. It localises to the microsome membrane. Its subcellular location is the cytoplasm. It catalyses the reaction Release of an N-terminal amino acid, Xaa-|-Yaa- from a peptide, amide or arylamide. Xaa is preferably Ala, but may be most amino acids including Pro (slow action). When a terminal hydrophobic residue is followed by a prolyl residue, the two may be released as an intact Xaa-Pro dipeptide.. The chain is Aminopeptidase M1-A from Oryza sativa subsp. japonica (Rice).